Here is a 60-residue protein sequence, read N- to C-terminus: U20-myrmicitoxin-Mri1a (60 aa).

The N-terminal stretch at 1–24 (MKSVILLFAVIAIIVAVIIPAING) is a signal peptide. Residues 25-34 (ESSSNPSANA) constitute a propeptide that is removed on maturation.

This sequence belongs to the formicidae venom precursor-01 superfamily. In terms of tissue distribution, expressed by the venom gland.

It is found in the secreted. In terms of biological role, induces paralysis 5 minutes after injection into blowflies (L.caesar), and then death within 24 hours. May have antimicrobial properties, like most ant linear peptides. In Manica rubida (European giant red ant), this protein is U20-myrmicitoxin-Mri1a.